Consider the following 156-residue polypeptide: MSESAERKSILDVVGIQELLPHRPPFLLVDRVVEFEAHRRLVALKGVTMNEPFFQGHFPAQPVMPGVLILEALAQAAALLATMSLKPDEVKDKITYLMGIDGARFRRPVVPGDRLELEVEVTKQKGAVWKQTGVARVDGQVVAEAEFMAMLADRER.

H57 is a catalytic residue.

The protein belongs to the thioester dehydratase family. FabZ subfamily.

It localises to the cytoplasm. It carries out the reaction a (3R)-hydroxyacyl-[ACP] = a (2E)-enoyl-[ACP] + H2O. Functionally, involved in unsaturated fatty acids biosynthesis. Catalyzes the dehydration of short chain beta-hydroxyacyl-ACPs and long chain saturated and unsaturated beta-hydroxyacyl-ACPs. This is 3-hydroxyacyl-[acyl-carrier-protein] dehydratase FabZ from Anaeromyxobacter dehalogenans (strain 2CP-C).